Here is a 148-residue protein sequence, read N- to C-terminus: Transcription antitermination protein NusB (148 aa).

The protein belongs to the NusB family.

Functionally, involved in transcription antitermination. Required for transcription of ribosomal RNA (rRNA) genes. Binds specifically to the boxA antiterminator sequence of the ribosomal RNA (rrn) operons. This Desulfitobacterium hafniense (strain DSM 10664 / DCB-2) protein is Transcription antitermination protein NusB.